We begin with the raw amino-acid sequence, 267 residues long: ATP synthase subunit a (267 aa).

The next 5 helical transmembrane spans lie at 38–58 (WHID…FVFY), 98–118 (IAPL…MDLI), 145–165 (NITF…SIKI), 208–228 (LFGN…MPWW), and 238–258 (AIFH…LTIV).

This sequence belongs to the ATPase A chain family. As to quaternary structure, F-type ATPases have 2 components, CF(1) - the catalytic core - and CF(0) - the membrane proton channel. CF(1) has five subunits: alpha(3), beta(3), gamma(1), delta(1), epsilon(1). CF(0) has three main subunits: a(1), b(2) and c(9-12). The alpha and beta chains form an alternating ring which encloses part of the gamma chain. CF(1) is attached to CF(0) by a central stalk formed by the gamma and epsilon chains, while a peripheral stalk is formed by the delta and b chains.

It localises to the cell inner membrane. In terms of biological role, key component of the proton channel; it plays a direct role in the translocation of protons across the membrane. In Psychromonas ingrahamii (strain DSM 17664 / CCUG 51855 / 37), this protein is ATP synthase subunit a.